We begin with the raw amino-acid sequence, 372 residues long: Putative aminopeptidase SgcX (372 aa).

2 residues coordinate a divalent metal cation: histidine 67 and aspartate 180. The Proton acceptor role is filled by glutamate 212. A divalent metal cation contacts are provided by glutamate 213, aspartate 235, and histidine 329.

Belongs to the peptidase M42 family. It depends on a divalent metal cation as a cofactor.

In Salmonella typhi, this protein is Putative aminopeptidase SgcX (sgcX).